Consider the following 365-residue polypeptide: MSSSFGKIFRVSTFGESHGGAVGVILDGCPPKLKVDINLIQNELDRRRPGQSDITTPRNEEDKIEILSGIKEGFTLGTPIAMLVRNKDQRPGDYDNLEQVFRPSHADGTYHLKYGIQASSGGGRASARETIGRVAAGAVAKQLLKTFCNTEILSWVKRIHDIESDINKEKISLKQIDSNIVRCPDEKVSTEMIERIKELKRQGDSCGGVIECLVRNVPSGLGMPVFDKLEADLAKALMSLPATKGFEIGSGFSGTYLKGSEHNDAFIKSDDISKLRTTSNNSGGIQGGISNGENIEMKIAFKPTATIGKEQKTVNAEGKEVLMKAKGRHDPCVLPRAVPMVDAMVALVLADHLLLNHAQCDLINK.

Arg47 contacts NADP(+). Residues 124–126, Gly287, 302–306, and Arg328 each bind FMN; these read RAS and KPTAT.

This sequence belongs to the chorismate synthase family. As to quaternary structure, homotetramer. The cofactor is FMNH2.

It catalyses the reaction 5-O-(1-carboxyvinyl)-3-phosphoshikimate = chorismate + phosphate. It functions in the pathway metabolic intermediate biosynthesis; chorismate biosynthesis; chorismate from D-erythrose 4-phosphate and phosphoenolpyruvate: step 7/7. Catalyzes the anti-1,4-elimination of the C-3 phosphate and the C-6 proR hydrogen from 5-enolpyruvylshikimate-3-phosphate (EPSP) to yield chorismate, which is the branch point compound that serves as the starting substrate for the three terminal pathways of aromatic amino acid biosynthesis. This reaction introduces a second double bond into the aromatic ring system. The chain is Chorismate synthase from Prochlorococcus marinus (strain AS9601).